Consider the following 738-residue polypeptide: Phosphoribosylformylglycinamidine synthase subunit PurL (738 aa).

Residue His53 is part of the active site. ATP is bound by residues Tyr56 and Lys95. Glu97 is a Mg(2+) binding site. Substrate contacts are provided by residues Ser98–His101 and Arg120. The Proton acceptor role is filled by His99. A Mg(2+)-binding site is contributed by Asp121. Residue Gln244 coordinates substrate. Asp274 lines the Mg(2+) pocket. Position 318–320 (Glu318–Gln320) interacts with substrate. ATP contacts are provided by Asp499 and Gly536. Residue Asn537 coordinates Mg(2+). Ser539 is a binding site for substrate.

Belongs to the FGAMS family. Monomer. Part of the FGAM synthase complex composed of 1 PurL, 1 PurQ and 2 PurS subunits.

The protein localises to the cytoplasm. The enzyme catalyses N(2)-formyl-N(1)-(5-phospho-beta-D-ribosyl)glycinamide + L-glutamine + ATP + H2O = 2-formamido-N(1)-(5-O-phospho-beta-D-ribosyl)acetamidine + L-glutamate + ADP + phosphate + H(+). Its pathway is purine metabolism; IMP biosynthesis via de novo pathway; 5-amino-1-(5-phospho-D-ribosyl)imidazole from N(2)-formyl-N(1)-(5-phospho-D-ribosyl)glycinamide: step 1/2. Functionally, part of the phosphoribosylformylglycinamidine synthase complex involved in the purines biosynthetic pathway. Catalyzes the ATP-dependent conversion of formylglycinamide ribonucleotide (FGAR) and glutamine to yield formylglycinamidine ribonucleotide (FGAM) and glutamate. The FGAM synthase complex is composed of three subunits. PurQ produces an ammonia molecule by converting glutamine to glutamate. PurL transfers the ammonia molecule to FGAR to form FGAM in an ATP-dependent manner. PurS interacts with PurQ and PurL and is thought to assist in the transfer of the ammonia molecule from PurQ to PurL. This is Phosphoribosylformylglycinamidine synthase subunit PurL from Lacticaseibacillus paracasei (strain ATCC 334 / BCRC 17002 / CCUG 31169 / CIP 107868 / KCTC 3260 / NRRL B-441) (Lactobacillus paracasei).